A 400-amino-acid polypeptide reads, in one-letter code: Axin-like protein 1 (400 aa).

The RGS domain maps to 4 to 132 (RSKFSIDRVL…TTTADVNTTW (129 aa)). 2 disordered regions span residues 190–233 (QETK…TLKV) and 278–306 (GTLE…GSEA). Residues 194–210 (NSSETEEHAESPRKEKS) are compositionally biased toward basic and acidic residues. The segment covering 287–298 (FTGTNNGFSTLQ) has biased composition (polar residues). The region spanning 305 to 392 (EAPKMTVELR…RITAICRMCP (88 aa)) is the DIX domain.

Interacts with bar-1, dsh-2, gsk-3, and mig-5.

Functionally, works in parallel with pry-1 in negatively regulating bar-1 signaling in vulval precursor cells and Q neuroblasts. Shown to have a role in excretory cell development. This is Axin-like protein 1 from Caenorhabditis elegans.